We begin with the raw amino-acid sequence, 1128 residues long: Cordon-bleu protein-like 1 (1128 aa).

A disordered region spans residues 1-35 (MDGRTPRPQDAPARRKPKAKAPLPPAETKYTDVSS). At threonine 139 the chain carries Phosphothreonine. Serine 204, serine 222, and serine 256 each carry phosphoserine. Disordered stretches follow at residues 249 to 309 (KKRD…VPQD), 325 to 441 (MSVD…SPKS), and 454 to 499 (TLKN…TSNG). At threonine 260 the chain carries Phosphothreonine. The span at 270-286 (FTRSNTISKPYISNTLP) shows a compositional bias: polar residues. At serine 273 the chain carries Phosphoserine. A Phosphothreonine modification is found at threonine 284. The KKRRAP 1 signature appears at 291-296 (KKRRAP). Residues serine 326, serine 333, serine 344, and serine 356 each carry the phosphoserine modification. Residues 345–357 (LQLSSMSAGNSSL) are compositionally biased toward polar residues. The KKRRAP 2 signature appears at 360–365 (TKRKAP). Polar residues predominate over residues 397-415 (SEANSPEELSSPAGISSDY). The span at 416–425 (SLEEIDEKEE) shows a compositional bias: acidic residues. Residues serine 438, serine 441, serine 461, serine 471, and serine 474 each carry the phosphoserine modification. The segment covering 475–488 (MEEKQETKSTDGQE) has biased composition (basic and acidic residues). Residues serine 563, serine 584, serine 786, serine 813, serine 814, and serine 821 each carry the phosphoserine modification. 4 disordered regions span residues 780–840 (TEDS…PFAP), 882–964 (SAAA…SQVS), 995–1081 (RSQS…PEQM), and 1103–1128 (IPSNTISVNGRSRLSHSMSPDAQDGH). Positions 899-908 (LTNKEAERDM) are enriched in basic and acidic residues. Residues serine 911, serine 917, serine 947, serine 1069, and serine 1070 each carry the phosphoserine modification. 2 stretches are compositionally biased toward polar residues: residues 1045–1081 (SAHNEQNSQIPTPTDGPSFTVMRQSSLTFQSSDPEQM) and 1103–1122 (IPSNTISVNGRSRLSHSMSP). Residues 1081-1101 (MRQSLLTAIRSGEAAAKLKRV) enclose the WH2 domain. Serine 1121 is modified (phosphoserine).

The chain is Cordon-bleu protein-like 1 from Homo sapiens (Human).